Consider the following 379-residue polypeptide: Glutamate 5-kinase (379 aa).

Lys15 contributes to the ATP binding site. 3 residues coordinate substrate: Ser56, Asp143, and Asn155. 175-176 provides a ligand contact to ATP; the sequence is SD. The region spanning 281–358 is the PUA domain; sequence KGTLTIDAGA…CDAAQILGIS (78 aa).

Belongs to the glutamate 5-kinase family.

The protein resides in the cytoplasm. The catalysed reaction is L-glutamate + ATP = L-glutamyl 5-phosphate + ADP. It functions in the pathway amino-acid biosynthesis; L-proline biosynthesis; L-glutamate 5-semialdehyde from L-glutamate: step 1/2. Functionally, catalyzes the transfer of a phosphate group to glutamate to form L-glutamate 5-phosphate. The chain is Glutamate 5-kinase from Nitrobacter hamburgensis (strain DSM 10229 / NCIMB 13809 / X14).